Consider the following 643-residue polypeptide: Macrolide export ATP-binding/permease protein MacB (643 aa).

The region spanning 4 to 242 is the ABC transporter domain; it reads IEIKELNRYF…VNNQSKAKSR (239 aa). 40–47 contributes to the ATP binding site; the sequence is GQSGSGKS. 4 consecutive transmembrane segments (helical) span residues 269–289, 523–543, 572–592, and 603–623; these read LLTM…VALG, IAFI…LVSV, ILIC…IGGI, and VFST…GVIF.

Belongs to the ABC transporter superfamily. Macrolide exporter (TC 3.A.1.122) family. As to quaternary structure, homodimer. Part of the tripartite efflux system MacAB-TolC, which is composed of an inner membrane transporter, MacB, a periplasmic membrane fusion protein, MacA, and an outer membrane component, TolC. The complex forms a large protein conduit and can translocate molecules across both the inner and outer membranes. Interacts with MacA.

The protein localises to the cell inner membrane. Functionally, part of the tripartite efflux system MacAB-TolC. MacB is a non-canonical ABC transporter that contains transmembrane domains (TMD), which form a pore in the inner membrane, and an ATP-binding domain (NBD), which is responsible for energy generation. Confers resistance against macrolides. In Mannheimia succiniciproducens (strain KCTC 0769BP / MBEL55E), this protein is Macrolide export ATP-binding/permease protein MacB.